The sequence spans 60 residues: Cytotoxin 4 (60 aa).

4 disulfides stabilise this stretch: C3–C21, C14–C38, C42–C53, and C54–C59.

This sequence belongs to the three-finger toxin family. Short-chain subfamily. Type IA cytotoxin sub-subfamily. Monomer in solution; Homodimer and oligomer in the presence of negatively charged lipids forming a pore with a size ranging between 20 and 30 Angstroms. Expressed by the venom gland.

It localises to the secreted. It is found in the target cell membrane. Functionally, shows cytolytic activity on many different cells by forming pore in lipid membranes. In vivo, increases heart rate or kills the animal by cardiac arrest. In addition, it binds to heparin with high affinity, interacts with Kv channel-interacting protein 1 (KCNIP1) in a calcium-independent manner, and binds to integrin alpha-V/beta-3 (ITGAV/ITGB3) with moderate affinity. In Naja mossambica (Mozambique spitting cobra), this protein is Cytotoxin 4.